A 964-amino-acid polypeptide reads, in one-letter code: Coatomer subunit beta (964 aa).

HEAT repeat units lie at residues 129–166 (ELLEPLMPAIRACLDHRHSYVRRNAVLAIFTIYKNFDW), 238–275 (AERSRFIRCIYNLLNSSSNAVRYESAGTLITLSLAPTA), 314–351 (KVMQDLVMDVLRVLAAPDIEVRRKTLALALDLVYSRNI), 393–430 (DVAANVIPVLVEFLSDTNELAAADVLIFIREAIQKFPA), and 466–506 (SQIL…QQGS). Residues 490–501 (RRLAGDQTEEQK) show a composition bias toward basic and acidic residues. The tract at residues 490-530 (RRLAGDQTEEQKQQQGSAGGNAAGSAAEGSGSGNASNKVTS) is disordered. The span at 512 to 526 (AGSAAEGSGSGNASN) shows a compositional bias: low complexity.

In terms of assembly, oligomeric complex that consists of at least the alpha, beta, beta', gamma, delta, epsilon and zeta subunits. During oogenesis and spermatogenesis, expressed in ovariole, germarium, testis tip and testis.

Its subcellular location is the cytoplasm. It localises to the golgi apparatus membrane. It is found in the cytoplasmic vesicle. The protein resides in the COPI-coated vesicle membrane. The coatomer is a cytosolic protein complex that binds to dilysine motifs and reversibly associates with Golgi non-clathrin-coated vesicles, which further mediate biosynthetic protein transport from the ER, via the Golgi up to the trans Golgi network. Coatomer complex is required for budding from Golgi membranes, and is essential for the retrograde Golgi-to-ER transport of dilysine-tagged proteins. Required for limiting lipid storage in lipid droplets. The sequence is that of Coatomer subunit beta from Drosophila melanogaster (Fruit fly).